The following is a 922-amino-acid chain: GPI inositol-deacylase (922 aa).

Over 1–11 (MFLHSVNLWNL) the chain is Cytoplasmic. A helical transmembrane segment spans residues 12–32 (AFYVFMVFLATLGLWDVFFGF). Over 33 to 597 (EENKCSMSYM…GQVVRFHGGA (565 aa)) the chain is Lumenal. Residue S174 is part of the active site. N-linked (GlcNAc...) asparagine glycans are attached at residues N363, N402, and N558. A helical membrane pass occupies residues 598–618 (LPAYVVSSILLAYGGQLYSLL). The Cytoplasmic segment spans residues 619-641 (STGYCLEYSTILDKEAKPYKVDP). Residues 642 to 662 (FVIMIKFLLGYKWFKELWDAV) traverse the membrane as a helical segment. Residues 663 to 668 (LLPELD) are Lumenal-facing. The chain crosses the membrane as a helical span at residues 669 to 689 (AIVLTSQSMCFPLVSLILFLF). Topologically, residues 690 to 694 (GTCTA) are cytoplasmic. The chain crosses the membrane as a helical span at residues 695–715 (YWSGLLSSTSVQLLSSLWLAL). Residues 716–733 (KRPAELPKDIKVMSPDLP) lie on the Lumenal side of the membrane. The chain crosses the membrane as a helical span at residues 734 to 754 (VLTVVFLIVSWTTCGALAILL). Residues 755-817 (SYLYYVFKVV…DAEDSLRMHS (63 aa)) lie on the Cytoplasmic side of the membrane. Residues 776–798 (NQPVNPKHSRRSEKKSNHHKDSA) are disordered. Residues 782-793 (KHSRRSEKKSNH) are compositionally biased toward basic residues. A helical membrane pass occupies residues 818–838 (TVINLLTWVVLLSMPSLIYWL). Over 839-894 (KNLRYYFKLSPDPCKPLAFLLIPAIAILGNTHTVSVKSSKLLKTVSQFPLPLAVGV) the chain is Lumenal. The chain crosses the membrane as a helical span at residues 895–915 (IAFGSSHLYRVPCFVIIPLVF). Residues 916 to 922 (HALCNFM) are Cytoplasmic-facing.

It belongs to the GPI inositol-deacylase family.

The protein resides in the endoplasmic reticulum membrane. GPI inositol-deacylase that catalyzes the remove of the acyl chain linked to the 2-OH position of inositol ring from the GPI-anchored protein (GPI-AP) in the endoplasmic reticulum. Initiates the post-attachment remodeling phase of GPI-AP biogenesis and participates in endoplasmic reticulum (ER)-to-Golgi transport of GPI-anchored protein. This chain is GPI inositol-deacylase, found in Mus musculus (Mouse).